We begin with the raw amino-acid sequence, 493 residues long: MTEADYADFLVVGGGTCGCVVAARLSEDPSATVMLLESGSGYRSALELPDVLGDPYRLPVGPASEYTWTYPVELTPRRASTIARGRTLGGSGAVNGAYFMRATRADFENWPSAWRYDDVLPYFKKSETDRDFESEFHGTAGPIPVERRAWDQLHPLSGEFHAAALGAGFPDDVDKNAPDSFGVGRVPLNVADHRRISTAIGYLMPALHRPNLRVESGVNVIRIVFSGTRAVGVDVLDDGNVRRIHADHVIVCSGAVATPHILLNSGVGPAEQLAEQGVSVILDRHGVGQNFVDHPEVLLPYHFSTPRAIRSQTPVLETALNLAELEIRPYTASFTDLVPGVPRMDHGVGVVLMAPRSRGSIELASGDPAGAPRIRYNYVASTHDRAANREGMQIAENLLESIAETGLIDRPVVEYTDEWVESRLGTSLHMSGSCVMGAESDPFAVVDDRCRVIGAQGLSIVDTSILPTIPTRGPHATAVMVAERASAILLGDE.

8-37 (DFLVVGGGTCGCVVAARLSEDPSATVMLLE) is a binding site for FAD. Catalysis depends on H429, which acts as the Proton acceptor.

The protein belongs to the GMC oxidoreductase family. It depends on FAD as a cofactor.

This is an uncharacterized protein from Rhodococcus erythropolis (Arthrobacter picolinophilus).